The primary structure comprises 282 residues: Protein canopy homolog 3 (282 aa).

An N-terminal signal peptide occupies residues 1–33 (MEPLPEPASGPRPRPHRLLLLSLLLLLLPLLPA). One can recognise a Saposin B-type domain in the interval 53 to 275 (SKCEVCKYVA…EGIQKASPLT (223 aa)). Cystine bridges form between C55/C212, C58/C200, and C110/C172. The N-linked (GlcNAc...) asparagine glycan is linked to N159. The stretch at 159-185 (NETSAEVADLKKQCDVLVEEFEEVIED) forms a coiled coil. The segment at 221–282 (KGDTAALGGK…PLTHSPPDEL (62 aa)) is disordered. Residues 255–266 (DLDGDPSPEEDE) show a composition bias toward acidic residues.

This sequence belongs to the canopy family. Interacts with HSP90B1; this interaction is disrupted in the presence of ATP. Interacts with TLR1, TLR2, TLR4 and TLR9.

It is found in the endoplasmic reticulum. Its function is as follows. Toll-like receptor (TLR)-specific co-chaperone for HSP90B1. Required for proper TLR folding, except that of TLR3, and hence controls TLR exit from the endoplasmic reticulum. Consequently, required for both innate and adaptive immune responses. The polypeptide is Protein canopy homolog 3 (CNPY3) (Bos taurus (Bovine)).